We begin with the raw amino-acid sequence, 789 residues long: Cadherin-6 (789 aa).

The N-terminal stretch at 1-18 (MRTYRYFLLLFWVGQPYP) is a signal peptide. A propeptide spanning residues 19–53 (TFSNPLSKRTSGFPAKRRALELSANSRNELSRSKR) is cleaved from the precursor. Cadherin domains follow at residues 54 to 159 (SWMW…EPIF), 160 to 268 (TKDV…PPRF), 269 to 383 (PQST…PPVF), 384 to 486 (SKPA…DNAP), and 487 to 608 (EFAE…LIHP). Residues 54 to 615 (SWMWNQFFLL…IHPTGLSTGA (562 aa)) lie on the Extracellular side of the membrane. N-linked (GlcNAc...) asparagine glycosylation occurs at Asn255. The interval 259–288 (TDVNDNPPRFPQSTYQFKTPESSPPGTPIG) is disordered. The segment covering 269–279 (PQSTYQFKTPE) has biased composition (polar residues). N-linked (GlcNAc...) asparagine glycans are attached at residues Asn399, Asn437, Asn455, and Asn536. A helical transmembrane segment spans residues 616–636 (LVAILLCIVILLVTVVLFAAL). Topologically, residues 637–789 (RRQRKKEPLI…YGGMDSDKDS (153 aa)) are cytoplasmic. Phosphoserine is present on residues Ser785 and Ser789.

As to expression, highly expressed in kidney and brain.

Its subcellular location is the cell membrane. Functionally, cadherins are calcium-dependent cell adhesion proteins. They preferentially interact with themselves in a homophilic manner in connecting cells; cadherins may thus contribute to the sorting of heterogeneous cell types. The polypeptide is Cadherin-6 (Cdh6) (Rattus norvegicus (Rat)).